The primary structure comprises 184 residues: Exosome complex protein LRP1 (184 aa).

The tract at residues 157–184 (DSTDHIRKASSKKSKRLDKVGKKKGGKK) is disordered. The segment covering 164 to 184 (KASSKKSKRLDKVGKKKGGKK) has biased composition (basic residues).

It belongs to the C1D family. As to quaternary structure, associates with nuclear form of the RNA exosome complex. Interacts with RRP4, RRP6, RRP45 and RRP46.

The protein localises to the nucleus. Its function is as follows. Required for exosome-dependent processing of pre-rRNA and small nucleolar RNA (snRNA) precursors. Involved in processing of 35S pre-rRNA at the A0, A1 and A2 sites. Required for activity of RRP6 in 7S pre-rRNA processing. Also has a role in 3'-processing of U4 and U5 small nuclear RNAs (snRNAs). Acts as a mRNA export factor. Mediates mRNA degradation upon UV irradiation. Maintains genome integrity where it is involved in both non-homologous end joining (NHEJ) and homologous recombination pathway repair of double strand DNA breaks. During NHEJ, required for joining 3'-overhanging ends. Also involved in telomere length regulation and maintenance. This is Exosome complex protein LRP1 (LRP1) from Saccharomyces cerevisiae (strain ATCC 204508 / S288c) (Baker's yeast).